A 622-amino-acid chain; its full sequence is Kinesin-like protein KIFC1 (622 aa).

The interval 1–88 (MKEALEPAKK…KRPGKRPDWD (88 aa)) is disordered. Residues 32–41 (SSLSQPQGPT) are compositionally biased toward polar residues. The stretch at 95–264 (DLTEELKCYR…QELKGNIRVF (170 aa)) forms a coiled coil. Residues 260-612 (NIRVFCRVRP…LRFASKVNQC (353 aa)) form the Kinesin motor domain. Residues 279 to 323 (PGFLLFPHGPAGPSDPPTRLSLSRSDDRRSTLTRAPAPTTRHDFS) form a disordered region. Phosphothreonine is present on Thr309. An ATP-binding site is contributed by 360–367 (GQTGSGKT).

It belongs to the TRAFAC class myosin-kinesin ATPase superfamily. Kinesin family. NCD subfamily. Binds NUBP1 and NUBP2. Interacts with PPP1R42.

The protein localises to the nucleus. Its subcellular location is the cytoplasm. The protein resides in the cytoskeleton. It localises to the microtubule organizing center. It is found in the centrosome. The protein localises to the spindle. Its subcellular location is the early endosome. Functionally, minus end-directed microtubule-dependent motor required for bipolar spindle formation. May contribute to movement of early endocytic vesicles. Regulates cilium formation and structure. The polypeptide is Kinesin-like protein KIFC1 (Cricetulus griseus (Chinese hamster)).